The primary structure comprises 165 residues: MSDADPSLQRIISVELDEGSIVWRNPDVEQERRVAIFDLIEENRFVPQRGHPDGYAGPYRLKLRVEDGRLIFEIAREDGSPLEAVILGLGRFRRPIRDYFAICDSYYQAIKTSTAQQIETVDMARRALHNEAAEMLMDRLDGKIAVDFDTARRLFTLICVLHIKG.

Belongs to the UPF0262 family.

In Sphingopyxis alaskensis (strain DSM 13593 / LMG 18877 / RB2256) (Sphingomonas alaskensis), this protein is UPF0262 protein Sala_0765.